We begin with the raw amino-acid sequence, 252 residues long: MTQLKELPLTTLQFYATAPYACSYLPNKTARSQVATPSHLIHADVYGDLLNAGFRRSGLYTYRPYCDECKACIATRILVNQFIPSRSQRRAQKKHAGLEVFVLNLGYQEEHYQLYQRYQHERHAGGDMDSDDQDQYMQFLLQSRVNSRIVEFRDGPHDPHPGRLRMVSMIDILEEGISSVYTFYDTSSHAASYGSYNILWQLEQARTLSLPYLYLGYYIKESDKMSYKIKYQPMEGLIDDHWQKLLGHNIYP.

This sequence belongs to the R-transferase family. Bpt subfamily.

The protein resides in the cytoplasm. The enzyme catalyses N-terminal L-glutamyl-[protein] + L-leucyl-tRNA(Leu) = N-terminal L-leucyl-L-glutamyl-[protein] + tRNA(Leu) + H(+). It carries out the reaction N-terminal L-aspartyl-[protein] + L-leucyl-tRNA(Leu) = N-terminal L-leucyl-L-aspartyl-[protein] + tRNA(Leu) + H(+). Functionally, functions in the N-end rule pathway of protein degradation where it conjugates Leu from its aminoacyl-tRNA to the N-termini of proteins containing an N-terminal aspartate or glutamate. This is Aspartate/glutamate leucyltransferase from Polynucleobacter necessarius subsp. necessarius (strain STIR1).